Here is a 223-residue protein sequence, read N- to C-terminus: uncharacterized protein (223 aa).

A signal peptide spans 1–22 (MHLKKALCPALCTFLIHLCLHA). Positions 30-204 (DIFLMIDKSR…RSIAAAHSKR (175 aa)) constitute a VWFA domain. The tract at residues 199–223 (AAHSKRPTPTPPAKESSPRYTPSLD) is disordered.

This is an uncharacterized protein from Treponema pallidum (strain Nichols).